A 272-amino-acid chain; its full sequence is MKTIVLKLGGEIVHSPELDLVARDLRTLVDGWNRVAIVHGGGPQATALQKRLGLETRMVAGRRFTDEATLEVMKYVVAGRLNVDLCGRLLANGVMPVGLHGASGHAIQATRRPPRVMQGAGPEPVDLGLVGDVVGFNLPLLGDLFERRYVPVLACLGCDDAGQALNINGDTVASQLAGALRADALVLVTSTPGVLRDVKDPSSRIPRITRAEFERLVADGTISGGMIPKLEESFEVLRGGARSVVILGKLAPGDLEAALLEPGSAGTVLVAD.

Substrate contacts are provided by residues 41 to 42 (GG), Arg63, and Asn166.

This sequence belongs to the acetylglutamate kinase family. ArgB subfamily.

The protein localises to the cytoplasm. The enzyme catalyses N-acetyl-L-glutamate + ATP = N-acetyl-L-glutamyl 5-phosphate + ADP. Its pathway is amino-acid biosynthesis; L-arginine biosynthesis; N(2)-acetyl-L-ornithine from L-glutamate: step 2/4. Catalyzes the ATP-dependent phosphorylation of N-acetyl-L-glutamate. This is Acetylglutamate kinase from Anaeromyxobacter dehalogenans (strain 2CP-1 / ATCC BAA-258).